The sequence spans 104 residues: Large ribosomal subunit protein uL24 (104 aa).

Belongs to the universal ribosomal protein uL24 family. Part of the 50S ribosomal subunit.

Functionally, one of two assembly initiator proteins, it binds directly to the 5'-end of the 23S rRNA, where it nucleates assembly of the 50S subunit. In terms of biological role, one of the proteins that surrounds the polypeptide exit tunnel on the outside of the subunit. The sequence is that of Large ribosomal subunit protein uL24 from Colwellia psychrerythraea (strain 34H / ATCC BAA-681) (Vibrio psychroerythus).